The chain runs to 387 residues: Mannitol-1-phosphate 5-dehydrogenase (387 aa).

NAD(+) is bound at residue 3-14 (ALHFGAGNIGRG).

The protein belongs to the mannitol dehydrogenase family.

It carries out the reaction D-mannitol 1-phosphate + NAD(+) = beta-D-fructose 6-phosphate + NADH + H(+). This Yersinia pseudotuberculosis serotype O:1b (strain IP 31758) protein is Mannitol-1-phosphate 5-dehydrogenase.